A 358-amino-acid polypeptide reads, in one-letter code: WD repeat domain phosphoinositide-interacting protein 4 (358 aa).

2 WD repeats span residues 2-40 and 188-228; these read AQQR…EKGH and AHQS…KLVE. Positions 229–232 match the L/FRRG motif motif; sequence LRRG. Residues 233–272 form a WD 3 repeat; that stretch reads TDPATLYCINFSHDSSFLCASSDKGTVHIFALKDTKLNRR.

The protein belongs to the WD repeat PROPPIN family.

Its subcellular location is the preautophagosomal structure. Component of the autophagy machinery that controls the major intracellular degradation process by which cytoplasmic materials are packaged into autophagosomes and delivered to lysosomes for degradation. Binds phosphatidylinositol 3-phosphate (PtdIns3P). The polypeptide is WD repeat domain phosphoinositide-interacting protein 4 (wdr45) (Danio rerio (Zebrafish)).